The primary structure comprises 198 residues: MEHLLSIFVKSVFIENMALSFFLGMCTFLAVSKKVSTAFGLGIAVIVVLGIAVPVNQLVYTHILKDGVLVDGVDLSFLNFITFIGVIAALVQILEMILDKFFPALYSALGIFLPLITVNCAIFGGVSFMVQREYDLVESVVYGIGAGTGWMLAIVALAGLTEKMKYSDVPAGLRGLGITFITVGLMALGFMSFSGIQL.

The next 6 helical transmembrane spans lie at 11 to 31 (SVFI…FLAV), 35 to 55 (VSTA…AVPV), 77 to 97 (FLNF…LEMI), 110 to 130 (GIFL…SFMV), 140 to 160 (VVYG…LAGL), and 176 to 196 (LGIT…FSGI).

The protein belongs to the NqrDE/RnfAE family. In terms of assembly, composed of six subunits; NqrA, NqrB, NqrC, NqrD, NqrE and NqrF.

It localises to the cell inner membrane. The catalysed reaction is a ubiquinone + n Na(+)(in) + NADH + H(+) = a ubiquinol + n Na(+)(out) + NAD(+). Its function is as follows. NQR complex catalyzes the reduction of ubiquinone-1 to ubiquinol by two successive reactions, coupled with the transport of Na(+) ions from the cytoplasm to the periplasm. NqrA to NqrE are probably involved in the second step, the conversion of ubisemiquinone to ubiquinol. This is Na(+)-translocating NADH-quinone reductase subunit E from Haemophilus ducreyi (strain 35000HP / ATCC 700724).